We begin with the raw amino-acid sequence, 659 residues long: Acetyl-coenzyme A synthetase (659 aa).

Residues 1 to 35 (MATEQTKGQSSESISSVLSERRKFPPPEAFSSQSH) form a disordered region. CoA contacts are provided by residues 205–208 (RRGS), T323, and N347. ATP-binding positions include 399–401 (GEP), 423–428 (DTWWQT), D512, and R527. S535 is a binding site for CoA. R538 provides a ligand contact to ATP. The Mg(2+) site is built by V549, H551, and V554. At K621 the chain carries N6-acetyllysine.

The protein belongs to the ATP-dependent AMP-binding enzyme family. The cofactor is Mg(2+). Acetylated. Deacetylation by the SIR2-homolog deacetylase activates the enzyme.

The enzyme catalyses acetate + ATP + CoA = acetyl-CoA + AMP + diphosphate. Functionally, catalyzes the conversion of acetate into acetyl-CoA (AcCoA), an essential intermediate at the junction of anabolic and catabolic pathways. AcsA undergoes a two-step reaction. In the first half reaction, AcsA combines acetate with ATP to form acetyl-adenylate (AcAMP) intermediate. In the second half reaction, it can then transfer the acetyl group from AcAMP to the sulfhydryl group of CoA, forming the product AcCoA. The polypeptide is Acetyl-coenzyme A synthetase (Chlorobaculum tepidum (strain ATCC 49652 / DSM 12025 / NBRC 103806 / TLS) (Chlorobium tepidum)).